The following is a 335-amino-acid chain: Phospho-N-acetylmuramoyl-pentapeptide-transferase (335 aa).

A run of 10 helical transmembrane segments spans residues 3–23 (LTIL…PHFI), 53–73 (GGTV…LVYF), 78–98 (SLGL…IGFL), 118–138 (FTLQ…PSGI), 143–163 (VFGY…FWVV), 174–194 (GIDG…GVIA), 200–220 (FDVL…FLFN), 226–246 (IFMG…ISIA), 251–271 (WTLL…MLQV), and 314–334 (VDAF…AILY).

The protein belongs to the glycosyltransferase 4 family. MraY subfamily. The cofactor is Mg(2+).

Its subcellular location is the cell membrane. The enzyme catalyses UDP-N-acetyl-alpha-D-muramoyl-L-alanyl-gamma-D-glutamyl-L-lysyl-D-alanyl-D-alanine + di-trans,octa-cis-undecaprenyl phosphate = Mur2Ac(oyl-L-Ala-gamma-D-Glu-L-Lys-D-Ala-D-Ala)-di-trans,octa-cis-undecaprenyl diphosphate + UMP. It participates in cell wall biogenesis; peptidoglycan biosynthesis. Catalyzes the initial step of the lipid cycle reactions in the biosynthesis of the cell wall peptidoglycan: transfers peptidoglycan precursor phospho-MurNAc-pentapeptide from UDP-MurNAc-pentapeptide onto the lipid carrier undecaprenyl phosphate, yielding undecaprenyl-pyrophosphoryl-MurNAc-pentapeptide, known as lipid I. The polypeptide is Phospho-N-acetylmuramoyl-pentapeptide-transferase (Streptococcus equi subsp. zooepidemicus (strain MGCS10565)).